Consider the following 96-residue polypeptide: Co-chaperonin GroES (96 aa).

It belongs to the GroES chaperonin family. As to quaternary structure, heptamer of 7 subunits arranged in a ring. Interacts with the chaperonin GroEL.

It localises to the cytoplasm. Together with the chaperonin GroEL, plays an essential role in assisting protein folding. The GroEL-GroES system forms a nano-cage that allows encapsulation of the non-native substrate proteins and provides a physical environment optimized to promote and accelerate protein folding. GroES binds to the apical surface of the GroEL ring, thereby capping the opening of the GroEL channel. In Vibrio atlanticus (strain LGP32) (Vibrio splendidus (strain Mel32)), this protein is Co-chaperonin GroES.